The sequence spans 247 residues: tRNA (guanine-N(1)-)-methyltransferase (247 aa).

S-adenosyl-L-methionine-binding positions include Gly112 and 132 to 137 (IGDFVL).

It belongs to the RNA methyltransferase TrmD family. In terms of assembly, homodimer.

The protein localises to the cytoplasm. The catalysed reaction is guanosine(37) in tRNA + S-adenosyl-L-methionine = N(1)-methylguanosine(37) in tRNA + S-adenosyl-L-homocysteine + H(+). Its function is as follows. Specifically methylates guanosine-37 in various tRNAs. The protein is tRNA (guanine-N(1)-)-methyltransferase of Geotalea uraniireducens (strain Rf4) (Geobacter uraniireducens).